Consider the following 441-residue polypeptide: Proline--tRNA ligase (441 aa).

It belongs to the class-II aminoacyl-tRNA synthetase family. ProS type 2 subfamily. In terms of assembly, homodimer.

Its subcellular location is the cytoplasm. It carries out the reaction tRNA(Pro) + L-proline + ATP = L-prolyl-tRNA(Pro) + AMP + diphosphate. In terms of biological role, catalyzes the attachment of proline to tRNA(Pro) in a two-step reaction: proline is first activated by ATP to form Pro-AMP and then transferred to the acceptor end of tRNA(Pro). This chain is Proline--tRNA ligase, found in Methylobacterium radiotolerans (strain ATCC 27329 / DSM 1819 / JCM 2831 / NBRC 15690 / NCIMB 10815 / 0-1).